We begin with the raw amino-acid sequence, 292 residues long: Type II methyltransferase M.SmaI (292 aa).

Residues 110–130 (WRDKDDKNKGRAMSYRPPTPE) are disordered.

This sequence belongs to the N(4)/N(6)-methyltransferase family. N(4) subfamily.

It catalyses the reaction a 2'-deoxycytidine in DNA + S-adenosyl-L-methionine = an N(4)-methyl-2'-deoxycytidine in DNA + S-adenosyl-L-homocysteine + H(+). Its function is as follows. A beta subtype methylase thatnrecognizes the double-stranded sequence 5'-CCCGGG-3', methylates C-2 on both strands, and protects the DNA from cleavage by the SmaI endonuclease. This Serratia marcescens protein is Type II methyltransferase M.SmaI (smaIM).